The following is a 413-amino-acid chain: Serine hydroxymethyltransferase (413 aa).

Residues L119 and 123 to 125 each bind (6S)-5,6,7,8-tetrahydrofolate; that span reads GHL. N6-(pyridoxal phosphate)lysine is present on K228. A (6S)-5,6,7,8-tetrahydrofolate-binding site is contributed by 351 to 353; the sequence is SPF.

The protein belongs to the SHMT family. Homodimer. Requires pyridoxal 5'-phosphate as cofactor.

The protein localises to the cytoplasm. It carries out the reaction (6R)-5,10-methylene-5,6,7,8-tetrahydrofolate + glycine + H2O = (6S)-5,6,7,8-tetrahydrofolate + L-serine. It participates in one-carbon metabolism; tetrahydrofolate interconversion. Its pathway is amino-acid biosynthesis; glycine biosynthesis; glycine from L-serine: step 1/1. In terms of biological role, catalyzes the reversible interconversion of serine and glycine with tetrahydrofolate (THF) serving as the one-carbon carrier. This reaction serves as the major source of one-carbon groups required for the biosynthesis of purines, thymidylate, methionine, and other important biomolecules. Also exhibits THF-independent aldolase activity toward beta-hydroxyamino acids, producing glycine and aldehydes, via a retro-aldol mechanism. In Clostridium botulinum (strain Okra / Type B1), this protein is Serine hydroxymethyltransferase.